A 352-amino-acid chain; its full sequence is MRKVRAIVIDDSAFMRKIISDILDNDPRIEVVAVARNGEDGLNKVIQLSPDVVTLDVHMPKMDGMQALQRIMNEHPVPVVMLSSVTKAGAEKTIQAISNGAVDFIMKPSGSISLDIRNVEDEIRKKVILASTVRVKSTQEASEEDFQSTRTVPTINREKKYRRSIVSIGTSTGGPKALQKVLTELPKDIQAPIVIVQHMPPGFTKSLADRLNSICAISVKEAVHGEILQSGTAYIAPGGFHMQVENVGMSLAIALDKSPPLKGHRPSVNKLFSSLQHIKNYNKITCILTGMGNDGTDGLQQLRLNEGSTISLAESADTAIVYGMPKAAVNAGLIDYEMSLHEIPSLIVKQLT.

The region spanning 5-122 (RAIVIDDSAF…SLDIRNVEDE (118 aa)) is the Response regulatory domain. D56 is modified (4-aspartylphosphate). The 190-residue stretch at 163–352 (RSIVSIGTST…IPSLIVKQLT (190 aa)) folds into the CheB-type methylesterase domain. Catalysis depends on residues S171, H198, and D294.

This sequence belongs to the CheB family. Post-translationally, phosphorylated by CheA. Phosphorylation of the N-terminal regulatory domain activates the methylesterase activity.

The protein resides in the cytoplasm. The catalysed reaction is [protein]-L-glutamate 5-O-methyl ester + H2O = L-glutamyl-[protein] + methanol + H(+). The enzyme catalyses L-glutaminyl-[protein] + H2O = L-glutamyl-[protein] + NH4(+). Involved in chemotaxis. Part of a chemotaxis signal transduction system that modulates chemotaxis in response to various stimuli. Catalyzes the demethylation of specific methylglutamate residues introduced into the chemoreceptors (methyl-accepting chemotaxis proteins or MCP) by CheR. Also mediates the irreversible deamidation of specific glutamine residues to glutamic acid. This chain is Protein-glutamate methylesterase/protein-glutamine glutaminase, found in Oceanobacillus iheyensis (strain DSM 14371 / CIP 107618 / JCM 11309 / KCTC 3954 / HTE831).